A 270-amino-acid chain; its full sequence is MSGSVLSLARPAAATNGHNLLTKQLNCNGNGTTGGAAKTTVASAITPPKQPQLAAKVIQQSQIVCFDVDSTVICEEGIDELAEYCGKGSEVARVTKEAMGGAMTFQDALKIRLNIIRPTQQQVRDFIQERPSTLSKNVKRFVSHLKAEGKQVYLISGGFDCLIAPVANELGIPLKNVYANKMLFDYLGEYDSFDINQPTSRSGGKAEAIALIRKENSDDSLITMIGDGATDLEAVPPANYFIGFGGNVVRPEVYRRAQYYVTDFEQLMGQ.

Catalysis depends on D67, which acts as the Nucleophile. The Mg(2+) site is built by D67 and D69. Residue D69 is the Proton donor of the active site. Substrate-binding positions include E76, R112, 156–157 (SG), and K205. A Mg(2+)-binding site is contributed by D227.

The protein belongs to the HAD-like hydrolase superfamily. SerB family. The cofactor is Mg(2+).

The enzyme catalyses O-phospho-L-serine + H2O = L-serine + phosphate. The catalysed reaction is O-phospho-D-serine + H2O = D-serine + phosphate. Its pathway is amino-acid biosynthesis; L-serine biosynthesis; L-serine from 3-phospho-D-glycerate: step 3/3. In terms of biological role, catalyzes the last step in the biosynthesis of serine from carbohydrates. The reaction mechanism proceeds via the formation of a phosphoryl-enzyme intermediates. This is Phosphoserine phosphatase (aay) from Drosophila melanogaster (Fruit fly).